A 384-amino-acid chain; its full sequence is NAD(P) transhydrogenase subunit alpha part 1 (384 aa).

The RQD loop; involved in interaction with PntB stretch occupies residues Pro-126–Ile-136. NAD(+) is bound by residues Arg-127–Ser-129, Gln-132–Asp-135, Val-180–Val-182, Asp-202–Arg-204, Gly-234, Gln-247, and Leu-266.

It belongs to the AlaDH/PNT family. As to quaternary structure, heterotrimer of two alpha chains and a beta (PntB) chain; in Rhodospirillum, the alpha chain is made of two subunits (PntAA and PntAB) and forms a dimer.

It catalyses the reaction NAD(+) + NADPH + H(+)(in) = NADH + NADP(+) + H(+)(out). In terms of biological role, the transhydrogenation between NADH and NADP is coupled to respiration and ATP hydrolysis and functions as a proton pump across the membrane. This chain is NAD(P) transhydrogenase subunit alpha part 1 (pntAA), found in Rhodospirillum rubrum (strain ATCC 11170 / ATH 1.1.1 / DSM 467 / LMG 4362 / NCIMB 8255 / S1).